The primary structure comprises 351 residues: MASKVQLVFLFLFLCAMWASPSAASRDEPNDPMMKRFEEWMAEYGRVYKDDDEKMRRFQIFKNNVKHIETFNSRNENSYTLGINQFTDMTKSEFVAQYTGVSLPLNIEREPVVSFDDVNISAVPQSIDWRDYGAVNEVKNQNPCGSCWSFAAIATVEGIYKIKTGYLVSLSEQEVLDCAVSYGCKGGWVNKAYDFIISNNGVTTEENYPYLAYQGTCNANSFPNSAYITGYSYVRRNDERSMMYAVSNQPIAALIDASENFQYYNGGVFSGPCGTSLNHAITIIGYGQDSSGTKYWIVRNSWGSSWGEGGYVRMARGVSSSSGVCGIAMAPLFPTLQSGANAEVIKMVSET.

The N-terminal stretch at 1–24 (MASKVQLVFLFLFLCAMWASPSAA) is a signal peptide. A propeptide spans 25–121 (SRDEPNDPMM…VVSFDDVNIS (97 aa)) (activation peptide). Asn119 carries N-linked (GlcNAc...) asparagine glycosylation. Cystine bridges form between Cys144/Cys184, Cys178/Cys217, and Cys273/Cys325. Cys147 is a catalytic residue. Catalysis depends on residues His279 and Asn300.

Belongs to the peptidase C1 family.

The enzyme catalyses Hydrolysis of proteins with broad specificity for peptide bonds. Bz-Phe-Val-Arg-|-NHMec is a good synthetic substrate, but there is no action on Z-Arg-Arg-|-NHMec (cf. stem bromelain).. In terms of biological role, cysteine proteinase with a high level of diversity in substrate specificity. In Ananas comosus (Pineapple), this protein is Fruit bromelain.